The following is a 583-amino-acid chain: Torsin-1A-interacting protein 1 (583 aa).

Topologically, residues 1–339 are nuclear; that stretch reads MAGERWRAEG…DESSVKIKWW (339 aa). The segment at 23–208 is disordered; it reads APIREGRRRL…PPLRSPRPDA (186 aa). Position 60 is a phosphoserine (Ser60). 2 stretches are compositionally biased toward basic and acidic residues: residues 70 to 101 and 115 to 132; these read FEPR…EVRE and GPQE…RLEQ. Phosphoserine is present on residues Ser134, Ser142, Ser155, and Ser157. Over residues 166-188 the composition is skewed to polar residues; the sequence is SSQPVTSQTVSKKTVRTPETSVM. Ser189 bears the Phosphoserine mark. Phosphothreonine is present on Thr222. Phosphoserine is present on residues Ser228, Ser231, and Ser242. A Glycyl lysine isopeptide (Lys-Gly) (interchain with G-Cter in SUMO2) cross-link involves residue Lys309. Residue Ser316 is modified to Phosphoserine. A helical transmembrane segment spans residues 340 to 360; it reads LLILVAALAMGIYWFFHTPVV. Positions 356–583 are interaction with TOR1A; that stretch reads HTPVVETTAV…ENALKAGSCL (228 aa). Residues 360–388 adopt a coiled-coil conformation; it reads VETTAVQEFQNQMKQLQSKYQSQDEKLWK. Residues 361-583 are Perinuclear space-facing; the sequence is ETTAVQEFQN…ENALKAGSCL (223 aa). N-linked (GlcNAc...) asparagine glycosylation occurs at Asn399.

This sequence belongs to the TOR1AIP family. As to quaternary structure, interacts with ATP1B4. Interacts with TOR1A (ATP-bound). Interacts with TOR1B, TOR2A and TOR3A. Interacts with VIM.

It localises to the nucleus inner membrane. Functionally, required for nuclear membrane integrity. Induces TOR1A and TOR1B ATPase activity and is required for their location on the nuclear membrane. Binds to A- and B-type lamins. Possible role in membrane attachment and assembly of the nuclear lamina. The protein is Torsin-1A-interacting protein 1 (Tor1aip1) of Rattus norvegicus (Rat).